Consider the following 128-residue polypeptide: Histone H2A type 1-H (128 aa).

The tract at residues 1–22 (MSGRGKQGGKARAKAKTRSSRA) is disordered. At S2 the chain carries N-acetylserine. The residue at position 2 (S2) is a Phosphoserine; by RPS6KA5. R4 carries the citrulline; alternate modification. R4 is modified (symmetric dimethylarginine; by PRMT5; alternate). N6-(2-hydroxyisobutyryl)lysine; alternate occurs at positions 6 and 10. K6 carries the N6-(beta-hydroxybutyryl)lysine; alternate modification. Residues 7–19 (QGGKARAKAKTRS) show a composition bias toward basic residues. The residue at position 10 (K10) is an N6-lactoyllysine; alternate. N6-succinyllysine; alternate is present on K10. Residues K14 and K16 each participate in a glycyl lysine isopeptide (Lys-Gly) (interchain with G-Cter in ubiquitin) cross-link. N6-(2-hydroxyisobutyryl)lysine; alternate is present on K37. K37 carries the post-translational modification N6-(beta-hydroxybutyryl)lysine; alternate. K37 carries the post-translational modification N6-crotonyllysine; alternate. An N6-(2-hydroxyisobutyryl)lysine mark is found at K75 and K76. K96 is modified (N6-(2-hydroxyisobutyryl)lysine; alternate). Residue K96 is modified to N6-succinyllysine; alternate. K96 is subject to N6-glutaryllysine; alternate. Q105 bears the N5-methylglutamine mark. Residue K119 is modified to N6-(2-hydroxyisobutyryl)lysine; alternate. K119 and K120 each carry N6-crotonyllysine; alternate. K119 and K120 each carry N6-glutaryllysine; alternate. K120 bears the N6-(beta-hydroxybutyryl)lysine; alternate mark. K120 participates in a covalent cross-link: Glycyl lysine isopeptide (Lys-Gly) (interchain with G-Cter in ubiquitin); alternate. A Phosphothreonine; by DCAF1 modification is found at T121. K126 carries the post-translational modification N6-(beta-hydroxybutyryl)lysine; alternate. N6-crotonyllysine; alternate is present on K126. K126 carries the N6-glutaryllysine; alternate modification.

It belongs to the histone H2A family. In terms of assembly, the nucleosome is a histone octamer containing two molecules each of H2A, H2B, H3 and H4 assembled in one H3-H4 heterotetramer and two H2A-H2B heterodimers. The octamer wraps approximately 147 bp of DNA. Deiminated on Arg-4 in granulocytes upon calcium entry. Post-translationally, monoubiquitination of Lys-120 (H2AK119Ub) by RING1, TRIM37 and RNF2/RING2 complex gives a specific tag for epigenetic transcriptional repression and participates in X chromosome inactivation of female mammals. It is involved in the initiation of both imprinted and random X inactivation. Ubiquitinated H2A is enriched in inactive X chromosome chromatin. Ubiquitination of H2A functions downstream of methylation of 'Lys-27' of histone H3 (H3K27me). H2AK119Ub by RNF2/RING2 can also be induced by ultraviolet and may be involved in DNA repair. Following DNA double-strand breaks (DSBs), it is ubiquitinated through 'Lys-63' linkage of ubiquitin moieties by the E2 ligase UBE2N and the E3 ligases RNF8 and RNF168, leading to the recruitment of repair proteins to sites of DNA damage. Ubiquitination at Lys-14 and Lys-16 (H2AK13Ub and H2AK15Ub, respectively) in response to DNA damage is initiated by RNF168 that mediates monoubiquitination at these 2 sites, and 'Lys-63'-linked ubiquitin are then conjugated to monoubiquitin; RNF8 is able to extend 'Lys-63'-linked ubiquitin chains in vitro. H2AK119Ub and ionizing radiation-induced 'Lys-63'-linked ubiquitination (H2AK13Ub and H2AK15Ub) are distinct events. In terms of processing, phosphorylation on Ser-2 (H2AS1ph) is enhanced during mitosis. Phosphorylation on Ser-2 by RPS6KA5/MSK1 directly represses transcription. Acetylation of H3 inhibits Ser-2 phosphorylation by RPS6KA5/MSK1. Phosphorylation at Thr-121 (H2AT120ph) by DCAF1 is present in the regulatory region of many tumor suppresor genes and down-regulates their transcription. Symmetric dimethylation on Arg-4 by the PRDM1/PRMT5 complex may play a crucial role in the germ-cell lineage. Post-translationally, glutamine methylation at Gln-105 (H2AQ104me) by FBL is specifically dedicated to polymerase I. It is present at 35S ribosomal DNA locus and impairs binding of the FACT complex. In terms of processing, crotonylation (Kcr) is specifically present in male germ cells and marks testis-specific genes in post-meiotic cells, including X-linked genes that escape sex chromosome inactivation in haploid cells. Crotonylation marks active promoters and enhancers and confers resistance to transcriptional repressors. It is also associated with post-meiotically activated genes on autosomes. Hydroxybutyrylation of histones is induced by starvation. Post-translationally, lactylated in macrophages by EP300/P300 by using lactoyl-CoA directly derived from endogenous or exogenous lactate, leading to stimulates gene transcription.

It localises to the nucleus. Its subcellular location is the chromosome. Functionally, core component of nucleosome. Nucleosomes wrap and compact DNA into chromatin, limiting DNA accessibility to the cellular machineries which require DNA as a template. Histones thereby play a central role in transcription regulation, DNA repair, DNA replication and chromosomal stability. DNA accessibility is regulated via a complex set of post-translational modifications of histones, also called histone code, and nucleosome remodeling. This Mus musculus (Mouse) protein is Histone H2A type 1-H.